Reading from the N-terminus, the 527-residue chain is Peptide chain release factor 3 (527 aa).

The region spanning 9 to 277 is the tr-type G domain; the sequence is AKRRTFAIIS…CIVDWAPQPL (269 aa). GTP contacts are provided by residues 18-25, 86-90, and 140-143; these read SHPDAGKT, DTPGH, and NKLD.

This sequence belongs to the TRAFAC class translation factor GTPase superfamily. Classic translation factor GTPase family. PrfC subfamily.

The protein resides in the cytoplasm. In terms of biological role, increases the formation of ribosomal termination complexes and stimulates activities of RF-1 and RF-2. It binds guanine nucleotides and has strong preference for UGA stop codons. It may interact directly with the ribosome. The stimulation of RF-1 and RF-2 is significantly reduced by GTP and GDP, but not by GMP. The chain is Peptide chain release factor 3 from Pseudomonas paraeruginosa (strain DSM 24068 / PA7) (Pseudomonas aeruginosa (strain PA7)).